Consider the following 405-residue polypeptide: Protein lin-11 (405 aa).

Residues Lys17 and Lys18 each participate in a glycyl lysine isopeptide (Lys-Gly) (interchain with G-Cter in SUMO) cross-link. 2 LIM zinc-binding domains span residues 68–124 (CAAC…RRYS) and 127–187 (CAGC…TATK). The span at 189–205 (STPTSIHRPVSNGSECN) shows a compositional bias: polar residues. Disordered regions lie at residues 189-208 (STPTSIHRPVSNGSECNSDV) and 224-246 (GEGDCGKDNSDDSNSAKRRGPRT). A DNA-binding region (homeobox) is located at residues 241 to 300 (RRGPRTTIKAKQLETLKNAFAATPKPTRHIREQLAAETGLNMRVIQVWFQNRRSKERRMK).

In terms of tissue distribution, expressed in ADL, AVJL, AIZL, RICL, RIF and AVG neurons.

Its subcellular location is the nucleus. Probable transcription factor which is required for asymmetric division of vulval blast cells. Involved in olfactory plasticity probably by regulating the expression of transcription factor mbr-1 in RIF neurons. Plays a role in the chemorepulsive response toward ascaroside pheromones mediated by the ADL sensory neurons, probably by regulating E-box motif 5'-CANNTG-3' containing target genes in the ADL neurons. Plays a role in the differentiation of the ADL sensory neurons. This chain is Protein lin-11 (lin-11), found in Caenorhabditis elegans.